The sequence spans 326 residues: Ribosomal large subunit pseudouridine synthase D (326 aa).

The S4 RNA-binding domain maps to 18–91; the sequence is QRLDQALAEM…IPLDIVYEDE (74 aa). The active site involves aspartate 139.

It belongs to the pseudouridine synthase RluA family. In late stage pre-50S ribosomal subunit interacts with ObgE and DarP(YjgA).

The protein resides in the cytoplasm. It carries out the reaction uridine(1911/1915/1917) in 23S rRNA = pseudouridine(1911/1915/1917) in 23S rRNA. Responsible for synthesis of pseudouridine from uracil at positions 1911, 1915 and 1917 in 23S ribosomal RNA. Other positions are not modified. Uridine isomerization occurs as a late step during the assembly of the large ribosomal subunit. Member of a network of 50S ribosomal subunit biogenesis factors (ObgE, RluD, RsfS and DarP(YjgA)) which assembles along the 30S-50S interface, allowing 23S rRNA modification and preventing incorrect 23S rRNA structures from forming. The protein is Ribosomal large subunit pseudouridine synthase D of Escherichia coli (strain K12).